A 589-amino-acid polypeptide reads, in one-letter code: Aspartate--tRNA ligase 2 (589 aa).

E174 is an L-aspartate binding site. The tract at residues 198-201 is aspartate; the sequence is QITK. R220 provides a ligand contact to L-aspartate. ATP-binding positions include 220-222 and Q229; that span reads RDE. Position 443 (H443) interacts with L-aspartate. E477 is an ATP binding site. R484 is an L-aspartate binding site. 529 to 532 lines the ATP pocket; sequence GLDR.

This sequence belongs to the class-II aminoacyl-tRNA synthetase family. Type 1 subfamily. In terms of assembly, homodimer.

The protein resides in the cytoplasm. It carries out the reaction tRNA(Asp) + L-aspartate + ATP = L-aspartyl-tRNA(Asp) + AMP + diphosphate. Functionally, catalyzes the attachment of L-aspartate to tRNA(Asp) in a two-step reaction: L-aspartate is first activated by ATP to form Asp-AMP and then transferred to the acceptor end of tRNA(Asp). The protein is Aspartate--tRNA ligase 2 of Streptococcus mutans serotype c (strain ATCC 700610 / UA159).